The primary structure comprises 359 residues: 3-dehydroquinate synthase (359 aa).

Residues 72–77 (EGEIHK), 106–110 (GVIGD), 130–131 (TS), Lys-143, Lys-152, and 170–173 (CLKT) contribute to the NAD(+) site. Positions 185, 248, and 264 each coordinate Zn(2+).

It belongs to the sugar phosphate cyclases superfamily. Dehydroquinate synthase family. The cofactor is Co(2+). Zn(2+) is required as a cofactor. Requires NAD(+) as cofactor.

The protein resides in the cytoplasm. It catalyses the reaction 7-phospho-2-dehydro-3-deoxy-D-arabino-heptonate = 3-dehydroquinate + phosphate. It participates in metabolic intermediate biosynthesis; chorismate biosynthesis; chorismate from D-erythrose 4-phosphate and phosphoenolpyruvate: step 2/7. Catalyzes the conversion of 3-deoxy-D-arabino-heptulosonate 7-phosphate (DAHP) to dehydroquinate (DHQ). The polypeptide is 3-dehydroquinate synthase (Dehalococcoides mccartyi (strain CBDB1)).